The sequence spans 319 residues: Putative olfactory receptor 52L2 (319 aa).

Topologically, residues 1-43 are extracellular; that stretch reads MNLDSFFSFLLKSLIMALSNSSWRLPQPSFFLVGIPGLEESQH. N-linked (GlcNAc...) asparagine glycosylation is present at asparagine 20. The chain crosses the membrane as a helical span at residues 44-64; the sequence is WIALPLGILYLLALVGNVTIL. Over 65-72 the chain is Cytoplasmic; sequence FIIWMDPS. A helical transmembrane segment spans residues 73–93; sequence LHQSMYLFLSMLAAIDLVVAS. The Extracellular portion of the chain corresponds to 94-117; that stretch reads STAPKALAVLLVRAQEIGYTVCLI. A disulfide bond links cysteine 115 and cysteine 207. The chain crosses the membrane as a helical span at residues 118-138; it reads QMFFTHAFSSMESGVLVAMAL. The Cytoplasmic portion of the chain corresponds to 139–157; the sequence is DRYVAICHPLHHSTILHPG. The helical transmembrane segment at 158–178 threads the bilayer; the sequence is VIGHIGMVVLVRGLLLLIPFL. The Extracellular portion of the chain corresponds to 179-214; the sequence is ILLRKLIFCQATIIGHAYCEHMAVVKLACSETTVNR. The chain crosses the membrane as a helical span at residues 215 to 235; sequence AYGLTVALLVVGLDVLAIGVS. Topologically, residues 236–255 are cytoplasmic; the sequence is YAHILQAVLKVPGNEARLKA. Residues 256 to 276 traverse the membrane as a helical segment; it reads FSTCGSHVCVILVFYIPGMFS. The Extracellular portion of the chain corresponds to 277 to 291; the sequence is FLTHRFGHHVPHHVH. A helical membrane pass occupies residues 292 to 312; it reads VLLAILYRLVPPALNPLVYRV. Topologically, residues 313–319 are cytoplasmic; that stretch reads KTQKIHQ.

Belongs to the G-protein coupled receptor 1 family.

Its subcellular location is the cell membrane. Its function is as follows. Odorant receptor. This is Putative olfactory receptor 52L2 (OR52L2P) from Homo sapiens (Human).